The chain runs to 462 residues: ATP synthase subunit beta 1 (462 aa).

ATP is bound at residue 151-158 (GGAGVGKT).

The protein belongs to the ATPase alpha/beta chains family. As to quaternary structure, F-type ATPases have 2 components, CF(1) - the catalytic core - and CF(0) - the membrane proton channel. CF(1) has five subunits: alpha(3), beta(3), gamma(1), delta(1), epsilon(1). CF(0) has four main subunits: a(1), b(1), b'(1) and c(9-12).

It localises to the cell inner membrane. It catalyses the reaction ATP + H2O + 4 H(+)(in) = ADP + phosphate + 5 H(+)(out). In terms of biological role, produces ATP from ADP in the presence of a proton gradient across the membrane. The catalytic sites are hosted primarily by the beta subunits. This is ATP synthase subunit beta 1 from Chlorobium luteolum (strain DSM 273 / BCRC 81028 / 2530) (Pelodictyon luteolum).